The following is a 515-amino-acid chain: 2-isopropylmalate synthase (515 aa).

A Pyruvate carboxyltransferase domain is found at 5 to 267 (VIIFDTTLRD…HTSLKNDEIH (263 aa)). Residues aspartate 14, histidine 202, histidine 204, and asparagine 238 each contribute to the Mn(2+) site. The tract at residues 392-515 (KLNYLSVQSG…EIKQNKITTV (124 aa)) is regulatory domain.

This sequence belongs to the alpha-IPM synthase/homocitrate synthase family. LeuA type 1 subfamily. Homodimer. Mn(2+) is required as a cofactor.

The protein resides in the cytoplasm. The enzyme catalyses 3-methyl-2-oxobutanoate + acetyl-CoA + H2O = (2S)-2-isopropylmalate + CoA + H(+). It participates in amino-acid biosynthesis; L-leucine biosynthesis; L-leucine from 3-methyl-2-oxobutanoate: step 1/4. Catalyzes the condensation of the acetyl group of acetyl-CoA with 3-methyl-2-oxobutanoate (2-ketoisovalerate) to form 3-carboxy-3-hydroxy-4-methylpentanoate (2-isopropylmalate). This is 2-isopropylmalate synthase from Aliivibrio salmonicida (strain LFI1238) (Vibrio salmonicida (strain LFI1238)).